Reading from the N-terminus, the 337-residue chain is Vacuolar protein sorting-associated protein 26B-A (337 aa).

The interval 313-337 is disordered; sequence RFEGTSHPETRPQHSGAAAVEQEHE.

Belongs to the VPS26 family. As to quaternary structure, component of the heterotrimeric retromer cargo-selective complex (CSC) which is believed to associate with variable sorting nexins to form functionally distinct retromer complex variants.

It localises to the cytoplasm. It is found in the endosome membrane. The protein localises to the early endosome. Functionally, acts as a component of the retromer cargo-selective complex (CSC). The CSC is believed to be the core functional component of retromer or respective retromer complex variants acting to prevent missorting of selected transmembrane cargo proteins into the lysosomal degradation pathway. Retromer mediates retrograde transport of cargo proteins from endosomes to the trans-Golgi network (TGN). This chain is Vacuolar protein sorting-associated protein 26B-A (vps26b-a), found in Xenopus laevis (African clawed frog).